The following is a 137-amino-acid chain: Large ribosomal subunit protein uL16 (137 aa).

It belongs to the universal ribosomal protein uL16 family. In terms of assembly, part of the 50S ribosomal subunit.

Binds 23S rRNA and is also seen to make contacts with the A and possibly P site tRNAs. In Rhizobium etli (strain CIAT 652), this protein is Large ribosomal subunit protein uL16.